A 594-amino-acid chain; its full sequence is Arginine--tRNA ligase (594 aa).

The short motif at 139–149 (ANPTGPLHVGH) is the 'HIGH' region element.

It belongs to the class-I aminoacyl-tRNA synthetase family. Monomer.

The protein localises to the cytoplasm. The enzyme catalyses tRNA(Arg) + L-arginine + ATP = L-arginyl-tRNA(Arg) + AMP + diphosphate. This chain is Arginine--tRNA ligase, found in Paraburkholderia phymatum (strain DSM 17167 / CIP 108236 / LMG 21445 / STM815) (Burkholderia phymatum).